The following is a 149-amino-acid chain: Urease accessory protein UreE (149 aa).

The protein belongs to the UreE family.

It is found in the cytoplasm. In terms of biological role, involved in urease metallocenter assembly. Binds nickel. Probably functions as a nickel donor during metallocenter assembly. In Prochlorococcus marinus (strain AS9601), this protein is Urease accessory protein UreE.